A 253-amino-acid chain; its full sequence is 3-deoxy-manno-octulosonate cytidylyltransferase (253 aa).

It belongs to the KdsB family.

The protein resides in the cytoplasm. The enzyme catalyses 3-deoxy-alpha-D-manno-oct-2-ulosonate + CTP = CMP-3-deoxy-beta-D-manno-octulosonate + diphosphate. The protein operates within nucleotide-sugar biosynthesis; CMP-3-deoxy-D-manno-octulosonate biosynthesis; CMP-3-deoxy-D-manno-octulosonate from 3-deoxy-D-manno-octulosonate and CTP: step 1/1. It functions in the pathway bacterial outer membrane biogenesis; lipopolysaccharide biosynthesis. Functionally, activates KDO (a required 8-carbon sugar) for incorporation into bacterial lipopolysaccharide in Gram-negative bacteria. The sequence is that of 3-deoxy-manno-octulosonate cytidylyltransferase from Idiomarina loihiensis (strain ATCC BAA-735 / DSM 15497 / L2-TR).